The sequence spans 599 residues: Vitamin B12-dependent ribonucleotide reductase (599 aa).

193–197 (PTGTI) contributes to the substrate binding site. The segment at 519 to 555 (LAQSAPRQAGPAKAATTAPAAKAQEPAAAPSPKQAHN) is disordered. Positions 526 to 553 (QAGPAKAATTAPAAKAQEPAAAPSPKQA) are enriched in low complexity.

This sequence belongs to the ribonucleoside diphosphate reductase class-2 family. It depends on adenosylcob(III)alamin as a cofactor.

The enzyme catalyses a 2'-deoxyribonucleoside 5'-diphosphate + [thioredoxin]-disulfide + H2O = a ribonucleoside 5'-diphosphate + [thioredoxin]-dithiol. In terms of biological role, catalyzes the reduction of ribonucleotides to deoxyribonucleotides. May function to provide a pool of deoxyribonucleotide precursors for DNA repair during oxygen limitation and/or for immediate growth after restoration of oxygen. This is Vitamin B12-dependent ribonucleotide reductase (nrdJ) from Streptantibioticus cattleyicolor (Streptomyces cattleya).